Consider the following 141-residue polypeptide: Large ribosomal subunit protein uL11 (141 aa).

This sequence belongs to the universal ribosomal protein uL11 family. Part of the ribosomal stalk of the 50S ribosomal subunit. Interacts with L10 and the large rRNA to form the base of the stalk. L10 forms an elongated spine to which L12 dimers bind in a sequential fashion forming a multimeric L10(L12)X complex. In terms of processing, one or more lysine residues are methylated.

Its function is as follows. Forms part of the ribosomal stalk which helps the ribosome interact with GTP-bound translation factors. The protein is Large ribosomal subunit protein uL11 of Geobacillus kaustophilus (strain HTA426).